The following is a 207-amino-acid chain: ATP-dependent Clp protease proteolytic subunit (207 aa).

Residue serine 111 is the Nucleophile of the active site. Histidine 136 is a catalytic residue.

It belongs to the peptidase S14 family. Fourteen ClpP subunits assemble into 2 heptameric rings which stack back to back to give a disk-like structure with a central cavity, resembling the structure of eukaryotic proteasomes.

Its subcellular location is the cytoplasm. The catalysed reaction is Hydrolysis of proteins to small peptides in the presence of ATP and magnesium. alpha-casein is the usual test substrate. In the absence of ATP, only oligopeptides shorter than five residues are hydrolyzed (such as succinyl-Leu-Tyr-|-NHMec, and Leu-Tyr-Leu-|-Tyr-Trp, in which cleavage of the -Tyr-|-Leu- and -Tyr-|-Trp bonds also occurs).. In terms of biological role, cleaves peptides in various proteins in a process that requires ATP hydrolysis. Has a chymotrypsin-like activity. Plays a major role in the degradation of misfolded proteins. The polypeptide is ATP-dependent Clp protease proteolytic subunit (Aliivibrio salmonicida (strain LFI1238) (Vibrio salmonicida (strain LFI1238))).